Consider the following 728-residue polypeptide: Phosphoribosylformylglycinamidine synthase subunit PurL (728 aa).

The active site involves His42. ATP contacts are provided by Tyr45 and Lys84. Glu86 contributes to the Mg(2+) binding site. Substrate is bound by residues 87 to 90 and Arg109; that span reads SHNH. The Proton acceptor role is filled by His88. Mg(2+) is bound at residue Asp110. Residue Gln237 coordinates substrate. Asp265 is a Mg(2+) binding site. 309–311 serves as a coordination point for substrate; the sequence is ESQ. Residues Asp491 and Gly528 each coordinate ATP. Asn529 is a binding site for Mg(2+). A substrate-binding site is contributed by Ser531.

The protein belongs to the FGAMS family. Monomer. Part of the FGAM synthase complex composed of 1 PurL, 1 PurQ and 2 PurS subunits.

Its subcellular location is the cytoplasm. It carries out the reaction N(2)-formyl-N(1)-(5-phospho-beta-D-ribosyl)glycinamide + L-glutamine + ATP + H2O = 2-formamido-N(1)-(5-O-phospho-beta-D-ribosyl)acetamidine + L-glutamate + ADP + phosphate + H(+). Its pathway is purine metabolism; IMP biosynthesis via de novo pathway; 5-amino-1-(5-phospho-D-ribosyl)imidazole from N(2)-formyl-N(1)-(5-phospho-D-ribosyl)glycinamide: step 1/2. In terms of biological role, part of the phosphoribosylformylglycinamidine synthase complex involved in the purines biosynthetic pathway. Catalyzes the ATP-dependent conversion of formylglycinamide ribonucleotide (FGAR) and glutamine to yield formylglycinamidine ribonucleotide (FGAM) and glutamate. The FGAM synthase complex is composed of three subunits. PurQ produces an ammonia molecule by converting glutamine to glutamate. PurL transfers the ammonia molecule to FGAR to form FGAM in an ATP-dependent manner. PurS interacts with PurQ and PurL and is thought to assist in the transfer of the ammonia molecule from PurQ to PurL. The chain is Phosphoribosylformylglycinamidine synthase subunit PurL from Campylobacter jejuni subsp. doylei (strain ATCC BAA-1458 / RM4099 / 269.97).